We begin with the raw amino-acid sequence, 80 residues long: Putative membrane protein insertion efficiency factor (80 aa).

The interval 61 to 80 (KTGKDPVPDHFSLKRNQEGE) is disordered. Residues 62–80 (TGKDPVPDHFSLKRNQEGE) show a composition bias toward basic and acidic residues.

It belongs to the UPF0161 family.

The protein localises to the cell membrane. Could be involved in insertion of integral membrane proteins into the membrane. The sequence is that of Putative membrane protein insertion efficiency factor from Streptococcus pneumoniae serotype 2 (strain D39 / NCTC 7466).